A 441-amino-acid polypeptide reads, in one-letter code: POC1 centriolar protein homolog A (441 aa).

7 WD repeats span residues 16 to 55 (GHRDTVTTVDFNPNTKQLASGSMDSCLMIWNMKPQMRAYR), 58 to 97 (GHKDAILSVDFSPSGHLIASASRDKTVRLWVPSVKGESTV), 100 to 139 (AHTGTVRSVSFSGDGQSLVTASDDKTIKVWTVHRQKFLFS), 142 to 181 (QHINWVRCAKFSPDGRLIVSASDDKTIKLWDKTSRECIHS), 184 to 223 (EHGGFVNFVDFHPSGTCIAAAATDNTVKVWDIRMNKLIQH), 226 to 265 (VHSGVVNSLSFHPSGNYLITASNDSTLKVLDLLEGRLLYT), and 268 to 307 (GHQGPVTSVKFSREGEFFASGGSDEQVMVWKTNFDSASYA). Positions 323–380 (DYTSGVPAADRHRPERNAQTDQADDLEPRHIQMSAKDRSSPLSYTSRSIDQHHPQAED) are disordered. Basic and acidic residues-rich tracts occupy residues 331–340 (ADRHRPERNA), 348–361 (LEPRHIQMSAKDRS), and 371–380 (IDQHHPQAED). The stretch at 400–427 (LTRTVGILEQRLSLTEDKLKECIDNQQA) forms a coiled coil.

The protein belongs to the WD repeat POC1 family. Interacts with pat.

The protein resides in the cytoplasm. The protein localises to the cytoskeleton. Functionally, may play an important role in centriole assembly and/or stability and ciliogenesis. In Xenopus tropicalis (Western clawed frog), this protein is POC1 centriolar protein homolog A (poc1a).